We begin with the raw amino-acid sequence, 118 residues long: UPF0102 protein Franean1_1156 (118 aa).

Belongs to the UPF0102 family.

The protein is UPF0102 protein Franean1_1156 of Parafrankia sp. (strain EAN1pec).